The chain runs to 1511 residues: Pleiotropic ABC efflux transporter of multiple drugs (1511 aa).

Polar residues predominate over residues 1-14; that stretch reads MPEAKLNNNVNDVT. Residues 1–32 form a disordered region; it reads MPEAKLNNNVNDVTSYSSASSSTENAADLHNY. At 1–517 the chain is on the cytoplasmic side; that stretch reads MPEAKLNNNV…LLIRNMWRLR (517 aa). Phosphoserine is present on Ser-22. 2 positions are modified to phosphothreonine: Thr-49 and Thr-51. Residues 52 to 71 are disordered; it reads AQSMQNSTQSAPNKSDAQSI. Residues Ser-54, Ser-58, and Ser-61 each carry the phosphoserine modification. One can recognise an ABC transporter 1 domain in the interval 161-410; the sequence is LRKFQRSKET…FEDMGYVCPS (250 aa). The helical transmembrane segment at 518 to 542 threads the bilayer; sequence NNIGFTLFMILGNCSMALILGSMFF. The Extracellular segment spans residues 543-558; the sequence is KIMKKGDTSTFYFRGS. A helical membrane pass occupies residues 559-579; it reads AMFFAILFNAFSSLLEIFSLY. At 580–611 the chain is on the cytoplasmic side; that stretch reads EARPITEKHRTYSLYHPSADAFASVLSEIPSK. A helical membrane pass occupies residues 612–628; sequence LIIAVCFNIIFYFLVDF. The Extracellular segment spans residues 629–631; that stretch reads RRN. The helical transmembrane segment at 632–650 threads the bilayer; the sequence is GGVFFFYLLINIVAVFSMS. At 651-665 the chain is on the cytoplasmic side; the sequence is HLFRCVGSLTKTLSE. Residues 666–685 form a helical membrane-spanning segment; sequence AMVPASMLLLALSMYTGFAI. Over 686–774 the chain is Extracellular; that stretch reads PKKKILRWSK…QYYHKDKWRG (89 aa). N-linked (GlcNAc...) asparagine glycosylation is present at Asn-734. A helical membrane pass occupies residues 775-793; that stretch reads FGIGMAYVVFFFFVYLFLC. Residues 794–1237 are Cytoplasmic-facing; it reads EYNEGAKQKG…GTSLQGLQNQ (444 aa). The tract at residues 824–858 is disordered; that stretch reads EKNANDPENVGERSDLSSDRKMLQESSEEESDTYG. Lys-825 is covalently cross-linked (Glycyl lysine isopeptide (Lys-Gly) (interchain with G-Cter in ubiquitin)). Residues 833–846 show a composition bias toward basic and acidic residues; that stretch reads VGERSDLSSDRKML. Phosphoserine occurs at positions 837, 840, 841, 849, 850, and 854. Residues 869 to 1112 enclose the ABC transporter 2 domain; sequence FHWRNLCYEV…MIDYFESHGA (244 aa). 905 to 912 lines the ATP pocket; sequence GASGAGKT. Residues 1238–1260 form a helical membrane-spanning segment; that stretch reads MLAVFMFTVIFNPILQQYLPSFV. Residues 1261–1291 are Extracellular-facing; that stretch reads QQRDLYEARERPSRTFSWISFIFAQIFVEVP. A helical transmembrane segment spans residues 1292 to 1313; the sequence is WNILAGTIAYFIYYYPIGFYSN. Topologically, residues 1314 to 1324 are cytoplasmic; sequence ASAAGQLHERG. The chain crosses the membrane as a helical span at residues 1325–1349; sequence ALFWLFSCAFYVYVGSMGLLVISFN. At 1350-1354 the chain is on the extracellular side; the sequence is QVAES. The chain crosses the membrane as a helical span at residues 1355-1379; it reads AANLASLLFTMSLSFCGVMTTPSAM. Residues 1380–1388 are Cytoplasmic-facing; it reads PRFWIFMYR. Residues 1389-1407 traverse the membrane as a helical segment; it reads VSPLTYFIQALLAVGVANV. At 1408–1476 the chain is on the extracellular side; the sequence is DVKCADYELL…VNSFYSERWR (69 aa). Asn-1447 carries N-linked (GlcNAc...) asparagine glycosylation. A helical transmembrane segment spans residues 1477 to 1499; it reads NYGIFICYIAFNYIAGVFFYWLA. The Cytoplasmic segment spans residues 1500–1511; sequence RVPKKNGKLSKK.

It belongs to the ABC transporter superfamily. ABCG family. PDR (TC 3.A.1.205) subfamily. Post-translationally, ubiquitinylation mediates endocytosis and vacuolar degradation. Phosphorylation by casein kinase I stabilizes the protein half-life.

It is found in the cell membrane. FK506, isonitrile, enniatin, RU49953, kitasatospora E420, staurosporine CGP42700, prenyl-flavonoids, D-octapeptides were found to be inhibitors in vivo. Vanadate and oligomycin were found to be inhibitors in vitro. In terms of biological role, active efflux of weakly charged organic compounds of 90 cubic Angstroms to 300 cubic Angstroms surface volume. Confers resistance to numerous chemicals including cycloheximide, sulfomethuron methyl, steroids, antiseptics, antibiotics, anticancer, herbicides, mycotoxins, insecticides, ionophores, alkaloids, flavonoids, phenothiazines, organotin compounds, carbazoles, lysosomotropic aminoesters, detergents, rhodamines and other fluorophores, azoles and other antifungals. Exhibits nucleoside triphosphatase activity. This is Pleiotropic ABC efflux transporter of multiple drugs (PDR5) from Saccharomyces cerevisiae (strain ATCC 204508 / S288c) (Baker's yeast).